Consider the following 196-residue polypeptide: dTDP-4-dehydro-6-deoxyglucose 3-epimerase (196 aa).

Residues arginine 21, glutamate 26, 45–47 (QVN), and arginine 57 contribute to the substrate site. Catalysis depends on histidine 60, which acts as the Proton acceptor. Substrate is bound by residues lysine 70 and arginine 117. Residue tyrosine 130 is the Proton donor of the active site. The substrate site is built by glutamate 141 and arginine 166.

The protein belongs to the dTDP-4-dehydrorhamnose 3,5-epimerase family. Homodimer.

It carries out the reaction dTDP-4-dehydro-6-deoxy-alpha-D-glucose = dTDP-4-dehydro-6-deoxy-alpha-D-allose. It participates in antibiotic biosynthesis. Functionally, involved in the biosynthesis of dTDP-6-deoxy-D-allose, an intermediate in the biosynthesis of mycinose, which is one of the two unusual sugars attached to the 16-membered macrolactone ring of the aglycone antibiotic chalcomycin. Catalyzes the conversion of dTDP-4-oxo-6-deoxyglucose to dTDP-4-oxo-6-deoxyallose, via a C-3 epimerization. In Streptomyces bikiniensis, this protein is dTDP-4-dehydro-6-deoxyglucose 3-epimerase.